Reading from the N-terminus, the 648-residue chain is Pumilio homolog 3 (648 aa).

Residues 1 to 124 (MEVKGKKQFT…KKKKELKQSR (124 aa)) form a disordered region. The segment covering 17 to 27 (AQEKNRFHKNS) has biased composition (basic and acidic residues). Lys-33 carries the N6-acetyllysine modification. Basic residues predominate over residues 60–69 (LGKKGVKQFK). Over residues 94–124 (FQPDGRSDESAAKKPKWDDFKKKKKELKQSR) the composition is skewed to basic and acidic residues. Residues 106 to 118 (KKPKWDDFKKKKK) carry the Nuclear localization signal motif. The region spanning 143 to 510 (EILRRKDCDK…VVLDKSACVL (368 aa)) is the PUM-HD domain. 11 Pumilio repeats span residues 177-212 (HDST…LSKA), 213-248 (KYSR…MLRH), 249-277 (AEAS…ELYG), 289-325 (RTLD…VIKH), 326-361 (SLVH…LAHT), 362-397 (HDGA…VANG), 398-435 (QYSH…IVND), 436-504 (KYGR…VVLD), 505-551 (KSAC…IAEH), 552-596 (PAGH…WASV), and 597-636 (NRGA…KSTS). Positions 289–297 (RTLDKVLEV) are HA-8.

In terms of assembly, interacts with PARP1 (via catalytic domain). In terms of tissue distribution, widely expressed.

The protein localises to the nucleus. It localises to the nucleolus. The protein resides in the nucleoplasm. Its subcellular location is the chromosome. Its function is as follows. Inhibits the poly(ADP-ribosyl)ation activity of PARP1 and the degradation of PARP1 by CASP3 following genotoxic stress. Binds to double-stranded RNA or DNA without sequence specificity. Involved in development of the eye and of primordial germ cells. The polypeptide is Pumilio homolog 3 (Homo sapiens (Human)).